The following is a 422-amino-acid chain: MPNHSPRFISNLTRETYALILAGGRGSRLFELTDWRAKPALYFGGKFRVIDFPLSNCVNSGIRRIGVVTQYQSHSLIRHVMRGWGHFKRELGESVEILPASQRYSESWYQGTADAVFQNIDIIRHELPRYVMILSGDHVYRMDYAGMLAAHAQSGADMTVCCQEVPVAEAAGSFGVMEVAEDMRVVGFEEKPANPSCLPHDPERCLASMGNYVFNTEFLFDQLRKDAENVSSERDFGKDIIPSIIREHKVFAYAFKSGLGAGQDYWRDVGTLDTFWQANMELLSPEPHLNLYDAKWPIWTYQEQLPPAKFVFDDEDRRGMATDSIVSGGCIISGAKVKRSVLFNEVRICSYSEVEGAVILPDVVVLRNCRLKNVIIDRGCVIPEGMVIGHNHDHDRARGFRVTDKGVVLITREMLGLPVGFE.

Alpha-D-glucose 1-phosphate-binding positions include tyrosine 109, glycine 175, 190 to 191, and serine 208; that span reads EK.

Belongs to the bacterial/plant glucose-1-phosphate adenylyltransferase family. In terms of assembly, homotetramer.

It catalyses the reaction alpha-D-glucose 1-phosphate + ATP + H(+) = ADP-alpha-D-glucose + diphosphate. The protein operates within glycan biosynthesis; glycogen biosynthesis. Functionally, involved in the biosynthesis of ADP-glucose, a building block required for the elongation reactions to produce glycogen. Catalyzes the reaction between ATP and alpha-D-glucose 1-phosphate (G1P) to produce pyrophosphate and ADP-Glc. In Shewanella amazonensis (strain ATCC BAA-1098 / SB2B), this protein is Glucose-1-phosphate adenylyltransferase.